A 427-amino-acid polypeptide reads, in one-letter code: Glutamate-1-semialdehyde 2,1-aminomutase (427 aa).

Lys268 bears the N6-(pyridoxal phosphate)lysine mark.

This sequence belongs to the class-III pyridoxal-phosphate-dependent aminotransferase family. HemL subfamily. Requires pyridoxal 5'-phosphate as cofactor.

It localises to the cytoplasm. It carries out the reaction (S)-4-amino-5-oxopentanoate = 5-aminolevulinate. It participates in porphyrin-containing compound metabolism; protoporphyrin-IX biosynthesis; 5-aminolevulinate from L-glutamyl-tRNA(Glu): step 2/2. The chain is Glutamate-1-semialdehyde 2,1-aminomutase from Methanococcus maripaludis (strain C5 / ATCC BAA-1333).